The primary structure comprises 367 residues: DNA replication and repair protein RecF (367 aa).

30 to 37 (GANGSGKT) is a binding site for ATP.

This sequence belongs to the RecF family.

It is found in the cytoplasm. The RecF protein is involved in DNA metabolism; it is required for DNA replication and normal SOS inducibility. RecF binds preferentially to single-stranded, linear DNA. It also seems to bind ATP. The polypeptide is DNA replication and repair protein RecF (Pseudomonas syringae pv. syringae (strain B728a)).